We begin with the raw amino-acid sequence, 267 residues long: Putative carbamate hydrolase RutD (267 aa).

The AB hydrolase-1 domain occupies 14–115 (PTLVLSAGLG…EKLVVVNGWP (102 aa)).

It belongs to the AB hydrolase superfamily. Hydrolase RutD family.

It carries out the reaction carbamate + 2 H(+) = NH4(+) + CO2. Involved in pyrimidine catabolism. May facilitate the hydrolysis of carbamate, a reaction that can also occur spontaneously. The sequence is that of Putative carbamate hydrolase RutD from Serratia proteamaculans (strain 568).